The primary structure comprises 801 residues: Lon protease 2 (801 aa).

A Lon N-terminal domain is found at 14–209 (LPMLPVRDIV…LVNEILAAEL (196 aa)). Residue 361 to 368 (GPPGVGKT) coordinates ATP. Residues 597–778 (DSQVGVVQGL…DEVFAVAFDK (182 aa)) form the Lon proteolytic domain. Residues Ser-684 and Lys-727 contribute to the active site. Basic and acidic residues predominate over residues 780-791 (AKGQEKKPAAKK). Residues 780–801 (AKGQEKKPAAKKDPKKTKSLAA) are disordered. A compositionally biased stretch (basic residues) spans 792–801 (DPKKTKSLAA).

Belongs to the peptidase S16 family. Homohexamer. Organized in a ring with a central cavity.

Its subcellular location is the cytoplasm. It carries out the reaction Hydrolysis of proteins in presence of ATP.. Functionally, ATP-dependent serine protease that mediates the selective degradation of mutant and abnormal proteins as well as certain short-lived regulatory proteins. Required for cellular homeostasis and for survival from DNA damage and developmental changes induced by stress. Degrades polypeptides processively to yield small peptide fragments that are 5 to 10 amino acids long. Binds to DNA in a double-stranded, site-specific manner. The chain is Lon protease 2 from Bdellovibrio bacteriovorus (strain ATCC 15356 / DSM 50701 / NCIMB 9529 / HD100).